The primary structure comprises 681 residues: DNA-directed RNA polymerase subunit beta' (681 aa).

Zn(2+)-binding residues include Cys-69, Cys-71, Cys-87, and Cys-90. Mg(2+)-binding residues include Asp-489, Asp-491, and Asp-493.

This sequence belongs to the RNA polymerase beta' chain family. RpoC1 subfamily. In plastids the minimal PEP RNA polymerase catalytic core is composed of four subunits: alpha, beta, beta', and beta''. When a (nuclear-encoded) sigma factor is associated with the core the holoenzyme is formed, which can initiate transcription. It depends on Mg(2+) as a cofactor. Zn(2+) serves as cofactor.

The protein resides in the plastid. Its subcellular location is the chloroplast. It catalyses the reaction RNA(n) + a ribonucleoside 5'-triphosphate = RNA(n+1) + diphosphate. In terms of biological role, DNA-dependent RNA polymerase catalyzes the transcription of DNA into RNA using the four ribonucleoside triphosphates as substrates. This Nicotiana sylvestris (Wood tobacco) protein is DNA-directed RNA polymerase subunit beta'.